The following is a 590-amino-acid chain: Aspartate--tRNA(Asp/Asn) ligase (590 aa).

Glu175 lines the L-aspartate pocket. The aspartate stretch occupies residues Gln199–Lys202. L-aspartate is bound by residues Arg221 and His450. An ATP-binding site is contributed by Arg221–Glu223. Residue Glu484 coordinates ATP. Arg491 is an L-aspartate binding site. Gly536–Arg539 contacts ATP.

The protein belongs to the class-II aminoacyl-tRNA synthetase family. Type 1 subfamily. As to quaternary structure, homodimer.

It localises to the cytoplasm. The enzyme catalyses tRNA(Asx) + L-aspartate + ATP = L-aspartyl-tRNA(Asx) + AMP + diphosphate. Its function is as follows. Aspartyl-tRNA synthetase with relaxed tRNA specificity since it is able to aspartylate not only its cognate tRNA(Asp) but also tRNA(Asn). Reaction proceeds in two steps: L-aspartate is first activated by ATP to form Asp-AMP and then transferred to the acceptor end of tRNA(Asp/Asn). The protein is Aspartate--tRNA(Asp/Asn) ligase of Rhodopseudomonas palustris (strain BisB5).